We begin with the raw amino-acid sequence, 160 residues long: MEKDDLTHFNDEKRAKMVDVTSKSETKRRAIARATIHMNEETLARIHAGKIAKGDVLAVAQVAGIMAAKKTSELIPMCHPIMTTKADISFEDDGNTALTITSEVVTVGKTGVEMEALTAVTIAALTIYDMCKAMDKGMRIEKTYLVEKTGGKSGTFKAEA.

Substrate-binding positions include methionine 77 to histidine 79 and methionine 114 to glutamate 115. Aspartate 129 is a catalytic residue.

It belongs to the MoaC family. Homohexamer; trimer of dimers.

It carries out the reaction (8S)-3',8-cyclo-7,8-dihydroguanosine 5'-triphosphate = cyclic pyranopterin phosphate + diphosphate. It functions in the pathway cofactor biosynthesis; molybdopterin biosynthesis. Catalyzes the conversion of (8S)-3',8-cyclo-7,8-dihydroguanosine 5'-triphosphate to cyclic pyranopterin monophosphate (cPMP). This Listeria welshimeri serovar 6b (strain ATCC 35897 / DSM 20650 / CCUG 15529 / CIP 8149 / NCTC 11857 / SLCC 5334 / V8) protein is Cyclic pyranopterin monophosphate synthase.